The sequence spans 371 residues: MKMRACKWLLTLAVAFAATLSSAYAASRIKDVASLQAGRDNQLIGYGLVVGLQGTGDSLRSSPFTDQSIRAMLQNLGISTQGGDSRTRNVAAVLVTATLPPFASPGSRLDVTVGSLGDATSLRGGTLVMTSLSGADGQIYAVAQGSVVVSGFNAQGEAAQLNQGVTTAGRVPNGAIIERELPSKFKDGFNLVLQLRNPDFSTAVGMAAAINRYAAAQFGGRIAEALDSQSVLVQKPKMADLARLMADVENLVIETDAPARVVINERTGTIVIGQDVRVAQVAVSYGTLTVQVSETPTIVQPEPFSRGQTAYEPNTTIEAQSDGGTVAILNGSSLRSLVAGLNSIGVKPDGIIAILQSIKSAGALQAELVLQ.

Residues 1–25 (MKMRACKWLLTLAVAFAATLSSAYA) form the signal peptide.

Belongs to the FlgI family. In terms of assembly, the basal body constitutes a major portion of the flagellar organelle and consists of four rings (L,P,S, and M) mounted on a central rod.

It localises to the periplasm. It is found in the bacterial flagellum basal body. Assembles around the rod to form the L-ring and probably protects the motor/basal body from shearing forces during rotation. In Sinorhizobium medicae (strain WSM419) (Ensifer medicae), this protein is Flagellar P-ring protein.